The chain runs to 193 residues: MRLSDRDIELWIKNKKLVIEPIPNKELIHGVTIDVRLGNEFYTFCNKFNKNIDLSKSRNEISKILKKVMNKKHIIPNDHVFLLKPGMFVLAITLEKIFLPNNLVGWLDGRSSLARLGLMIHATSHRIDPGWGGNIVLEFFNSSNMILSLCPGMLIAAVSFEILSSPSIRPYNIRKNAKYFNQSEVTFSRIDQD.

Residues 110–115, Asp-128, 136–138, Tyr-171, Lys-178, and Gln-182 contribute to the dCTP site; these read RSSLAR and VLE. Catalysis depends on Glu-138, which acts as the Proton donor/acceptor.

Belongs to the dCTP deaminase family. In terms of assembly, homotrimer.

It catalyses the reaction dCTP + H2O + H(+) = dUTP + NH4(+). The protein operates within pyrimidine metabolism; dUMP biosynthesis; dUMP from dCTP (dUTP route): step 1/2. Catalyzes the deamination of dCTP to dUTP. This is dCTP deaminase from Buchnera aphidicola subsp. Baizongia pistaciae (strain Bp).